We begin with the raw amino-acid sequence, 484 residues long: Carbohydrate sulfotransferase 7 (484 aa).

Topologically, residues 1–12 (MKGRRRRRREYC) are cytoplasmic. The chain crosses the membrane as a helical; Signal-anchor for type II membrane protein span at residues 13–33 (KFTLLLALYTLLLLLVPSVLD). At 34–484 (SHSEQDKGRN…PLETKANWAV (451 aa)) the chain is on the lumenal side. Positions 71-90 (RSLAEGNPDRSPGSPGNLSA) are disordered. N-linked (GlcNAc...) asparagine glycosylation occurs at Asn87. 108-114 (WRTGSSF) lines the 3'-phosphoadenylyl sulfate pocket. N-linked (GlcNAc...) asparagine glycosylation is present at Asn184. 3'-phosphoadenylyl sulfate is bound at residue 276-284 (RDPRAVHNS). Asn405 carries an N-linked (GlcNAc...) asparagine glycan. Ser460 carries the post-translational modification Phosphoserine. Positions 460–473 (SGDERDRKTVREGE) are enriched in basic and acidic residues. The segment at 460–484 (SGDERDRKTVREGETPLETKANWAV) is disordered.

The protein belongs to the sulfotransferase 1 family. Gal/GlcNAc/GalNAc subfamily. As to expression, widely expressed. Highly expressed in kidney. Expressed at lower level in heart, lung and liver.

It localises to the golgi apparatus membrane. The catalysed reaction is chondroitin beta-D-glucuronate + n 3'-phosphoadenylyl sulfate = chondroitin 6'-sulfate + n adenosine 3',5'-bisphosphate + n H(+). Functionally, sulfotransferase that utilizes 3'-phospho-5'-adenylyl sulfate (PAPS) as sulfonate donor to catalyze the transfer of sulfate to position 6 of non-reducing N-acetylglucosamine (GlcNAc) residues. Preferentially acts on mannose-linked GlcNAc. Also able to catalyze the transfer of sulfate to position 6 of the N-acetylgalactosamine (GalNAc) residue of chondroitin. Also acts on core 2 mucin-type oligosaccharide and N-acetyllactosamine oligomer with a lower efficiency. Has weak or no activity toward keratan sulfate and oligosaccharides containing the Galbeta1-4GlcNAc. Catalyzes 6-O-sulfation of beta-benzyl GlcNAc but not alpha- or beta-benzyl GalNAc. This is Carbohydrate sulfotransferase 7 (Chst7) from Mus musculus (Mouse).